Consider the following 604-residue polypeptide: Glutamine--fructose-6-phosphate aminotransferase [isomerizing] (604 aa).

The active-site Nucleophile; for GATase activity is the C2. The Glutamine amidotransferase type-2 domain occupies 2–216 (CGIVGYVGFR…DGDVVRLTRE (215 aa)). SIS domains follow at residues 281 to 420 (LALD…GRGA) and 453 to 594 (VAEK…VDQP). Residue K599 is the For Fru-6P isomerization activity of the active site.

As to quaternary structure, homodimer.

It localises to the cytoplasm. It catalyses the reaction D-fructose 6-phosphate + L-glutamine = D-glucosamine 6-phosphate + L-glutamate. Its function is as follows. Catalyzes the first step in hexosamine metabolism, converting fructose-6P into glucosamine-6P using glutamine as a nitrogen source. This chain is Glutamine--fructose-6-phosphate aminotransferase [isomerizing], found in Thermus thermophilus (strain ATCC 27634 / DSM 579 / HB8).